The primary structure comprises 417 residues: S-adenosylmethionine synthase (417 aa).

Residue His-16 participates in ATP binding. Position 18 (Asp-18) interacts with Mg(2+). Glu-44 is a K(+) binding site. L-methionine contacts are provided by Glu-57 and Gln-100. A flexible loop region spans residues 100–110 (QSPDIAQGVDT). ATP contacts are provided by residues 175 to 177 (DGK), 251 to 252 (KF), Asp-260, 266 to 267 (RK), Ala-283, and Lys-287. Residue Asp-260 participates in L-methionine binding. Residue Lys-291 participates in L-methionine binding.

This sequence belongs to the AdoMet synthase family. In terms of assembly, homotetramer; dimer of dimers. It depends on Mg(2+) as a cofactor. K(+) serves as cofactor.

The protein localises to the cytoplasm. The catalysed reaction is L-methionine + ATP + H2O = S-adenosyl-L-methionine + phosphate + diphosphate. It functions in the pathway amino-acid biosynthesis; S-adenosyl-L-methionine biosynthesis; S-adenosyl-L-methionine from L-methionine: step 1/1. Catalyzes the formation of S-adenosylmethionine (AdoMet) from methionine and ATP. The overall synthetic reaction is composed of two sequential steps, AdoMet formation and the subsequent tripolyphosphate hydrolysis which occurs prior to release of AdoMet from the enzyme. This is S-adenosylmethionine synthase from Synechococcus elongatus (strain ATCC 33912 / PCC 7942 / FACHB-805) (Anacystis nidulans R2).